The following is a 169-amino-acid chain: Endoribonuclease YbeY (169 aa).

3 residues coordinate Zn(2+): His-117, His-121, and His-127.

Belongs to the endoribonuclease YbeY family. Zn(2+) serves as cofactor.

The protein resides in the cytoplasm. In terms of biological role, single strand-specific metallo-endoribonuclease involved in late-stage 70S ribosome quality control and in maturation of the 3' terminus of the 16S rRNA. The chain is Endoribonuclease YbeY from Mesoplasma florum (strain ATCC 33453 / NBRC 100688 / NCTC 11704 / L1) (Acholeplasma florum).